The sequence spans 317 residues: Acetyl-coenzyme A carboxylase carboxyl transferase subunit beta (317 aa).

The region spanning 30-299 (LWTKCVACTA…VLPPLNVREK (270 aa)) is the CoA carboxyltransferase N-terminal domain. The Zn(2+) site is built by Cys34, Cys37, Cys53, and Cys56. Residues 34–56 (CVACTALTYTKDLQANQLVCTEC) form a C4-type zinc finger.

It belongs to the AccD/PCCB family. Acetyl-CoA carboxylase is a heterohexamer composed of biotin carboxyl carrier protein (AccB), biotin carboxylase (AccC) and two subunits each of ACCase subunit alpha (AccA) and ACCase subunit beta (AccD). Zn(2+) is required as a cofactor.

The protein resides in the cytoplasm. The enzyme catalyses N(6)-carboxybiotinyl-L-lysyl-[protein] + acetyl-CoA = N(6)-biotinyl-L-lysyl-[protein] + malonyl-CoA. The protein operates within lipid metabolism; malonyl-CoA biosynthesis; malonyl-CoA from acetyl-CoA: step 1/1. Its function is as follows. Component of the acetyl coenzyme A carboxylase (ACC) complex. Biotin carboxylase (BC) catalyzes the carboxylation of biotin on its carrier protein (BCCP) and then the CO(2) group is transferred by the transcarboxylase to acetyl-CoA to form malonyl-CoA. In Crocosphaera subtropica (strain ATCC 51142 / BH68) (Cyanothece sp. (strain ATCC 51142)), this protein is Acetyl-coenzyme A carboxylase carboxyl transferase subunit beta.